The following is a 290-amino-acid chain: Diaminopimelate epimerase (290 aa).

Substrate contacts are provided by asparagine 14 and asparagine 67. The Proton donor role is filled by cysteine 76. Substrate-binding positions include 77-78, asparagine 166, asparagine 199, and 217-218; these read GN and ER. Cysteine 226 acts as the Proton acceptor in catalysis. Residue 227–228 participates in substrate binding; it reads GT.

The protein belongs to the diaminopimelate epimerase family. In terms of assembly, homodimer.

The protein localises to the cytoplasm. The enzyme catalyses (2S,6S)-2,6-diaminopimelate = meso-2,6-diaminopimelate. It functions in the pathway amino-acid biosynthesis; L-lysine biosynthesis via DAP pathway; DL-2,6-diaminopimelate from LL-2,6-diaminopimelate: step 1/1. Functionally, catalyzes the stereoinversion of LL-2,6-diaminopimelate (L,L-DAP) to meso-diaminopimelate (meso-DAP), a precursor of L-lysine and an essential component of the bacterial peptidoglycan. This chain is Diaminopimelate epimerase, found in Geobacillus kaustophilus (strain HTA426).